The primary structure comprises 55 residues: U2-theraphotoxin-Cg1a (55 aa).

The propeptide occupies 1–19; it reads DSPAWLKSMERIFQSEERE. 3 disulfide bridges follow: C20-C34, C27-C39, and C33-C47.

This sequence belongs to the neurotoxin 10 (Hwtx-1) family. 06 (F4b) subfamily. In terms of tissue distribution, expressed by the venom gland.

It is found in the secreted. In terms of biological role, probable ion channel inhibitor. The sequence is that of U2-theraphotoxin-Cg1a from Chilobrachys guangxiensis (Chinese earth tiger tarantula).